We begin with the raw amino-acid sequence, 404 residues long: Glucose-1-phosphate adenylyltransferase (404 aa).

Residues Y99, G164, E179–K180, and S197 each bind alpha-D-glucose 1-phosphate.

This sequence belongs to the bacterial/plant glucose-1-phosphate adenylyltransferase family.

It carries out the reaction alpha-D-glucose 1-phosphate + ATP + H(+) = ADP-alpha-D-glucose + diphosphate. It functions in the pathway glycan biosynthesis; glycogen biosynthesis. Its function is as follows. Involved in the biosynthesis of ADP-glucose, a building block, required in the biosynthesis of maltose-1-phosphate (M1P) and in the elongation reactions to produce linear alpha-1,4-glucans. Catalyzes the reaction between ATP and alpha-D-glucose 1-phosphate (G1P) to produce pyrophosphate and ADP-Glc. The sequence is that of Glucose-1-phosphate adenylyltransferase from Mycolicibacterium gilvum (strain PYR-GCK) (Mycobacterium gilvum (strain PYR-GCK)).